We begin with the raw amino-acid sequence, 564 residues long: Mitochondrial distribution and morphology protein 34-1 (564 aa).

In terms of domain architecture, SMP-LTD spans 1 to 195; it reads MAFKFNWSPL…LPAIIHRLSL (195 aa). Polar residues-rich tracts occupy residues 297-322 and 329-352; these read PDQNDSSASVMSPISPPLSRTQSQTG and DNASTSSAQSRTPTGPTQSFSSYG. 3 disordered regions span residues 297–408, 414–433, and 452–473; these read PDQN…VTSA, HEQPDDPVTPPLSPESDQSL, and DLSSEIVRDRAEPSEPRNPFNT. Basic residues predominate over residues 359–371; the sequence is RHSRAHARRRKKR. Residues 383-394 are compositionally biased toward low complexity; it reads SDSASVSVSDES. Over residues 396–408 the composition is skewed to polar residues; that stretch reads YTESASAPSVTSA. Positions 452–466 are enriched in basic and acidic residues; that stretch reads DLSSEIVRDRAEPSE.

The protein belongs to the MDM34 family. In terms of assembly, component of the ER-mitochondria encounter structure (ERMES) or MDM complex, composed of mmm1, mdm10, mdm12 and mdm34.

The protein resides in the mitochondrion outer membrane. In terms of biological role, component of the ERMES/MDM complex, which serves as a molecular tether to connect the endoplasmic reticulum (ER) and mitochondria. Components of this complex are involved in the control of mitochondrial shape and protein biogenesis, and function in nonvesicular lipid trafficking between the ER and mitochondria. Mdm34 is required for the interaction of the ER-resident membrane protein mmm1 and the outer mitochondrial membrane-resident beta-barrel protein mdm10. This Penicillium rubens (strain ATCC 28089 / DSM 1075 / NRRL 1951 / Wisconsin 54-1255) (Penicillium chrysogenum) protein is Mitochondrial distribution and morphology protein 34-1.